We begin with the raw amino-acid sequence, 945 residues long: Isoleucine--tRNA ligase (945 aa).

A 'HIGH' region motif is present at residues 67–77 (PYANGQIHLGH). E573 lines the L-isoleucyl-5'-AMP pocket. Residues 614–618 (KMSKS) carry the 'KMSKS' region motif. K617 is an ATP binding site. Zn(2+) contacts are provided by C908, C911, C928, and C931.

Belongs to the class-I aminoacyl-tRNA synthetase family. IleS type 1 subfamily. Monomer. The cofactor is Zn(2+).

The protein localises to the cytoplasm. The catalysed reaction is tRNA(Ile) + L-isoleucine + ATP = L-isoleucyl-tRNA(Ile) + AMP + diphosphate. In terms of biological role, catalyzes the attachment of isoleucine to tRNA(Ile). As IleRS can inadvertently accommodate and process structurally similar amino acids such as valine, to avoid such errors it has two additional distinct tRNA(Ile)-dependent editing activities. One activity is designated as 'pretransfer' editing and involves the hydrolysis of activated Val-AMP. The other activity is designated 'posttransfer' editing and involves deacylation of mischarged Val-tRNA(Ile). This chain is Isoleucine--tRNA ligase, found in Acinetobacter baylyi (strain ATCC 33305 / BD413 / ADP1).